The sequence spans 327 residues: GMP reductase (327 aa).

Cys-176 acts as the Thioimidate intermediate in catalysis. Position 205 to 228 (205 to 228) interacts with NADP(+); that stretch reads IIADGGIRTHGDIAKSIRFGASMV.

This sequence belongs to the IMPDH/GMPR family. GuaC type 2 subfamily.

It catalyses the reaction IMP + NH4(+) + NADP(+) = GMP + NADPH + 2 H(+). Functionally, catalyzes the irreversible NADPH-dependent deamination of GMP to IMP. It functions in the conversion of nucleobase, nucleoside and nucleotide derivatives of G to A nucleotides, and in maintaining the intracellular balance of A and G nucleotides. The protein is GMP reductase of Streptococcus pyogenes serotype M1.